Reading from the N-terminus, the 228-residue chain is Ribonuclease 3 (228 aa).

Residues 5 to 134 form the RNase III domain; sequence RSKLEKDYGI…FLGALLLDKG (130 aa). Glu47 lines the Mg(2+) pocket. Asp51 is a catalytic residue. Asp120 and Glu123 together coordinate Mg(2+). Glu123 is an active-site residue. Residues 160–228 form the DRBM domain; that stretch reads DYKTSLQELL…AAKNALATLQ (69 aa).

Belongs to the ribonuclease III family. Homodimer. The cofactor is Mg(2+).

The protein localises to the cytoplasm. It carries out the reaction Endonucleolytic cleavage to 5'-phosphomonoester.. Functionally, digests double-stranded RNA. Involved in the processing of primary rRNA transcript to yield the immediate precursors to the large and small rRNAs (23S and 16S). Processes some mRNAs, and tRNAs when they are encoded in the rRNA operon. Processes pre-crRNA and tracrRNA of type II CRISPR loci if present in the organism. The chain is Ribonuclease 3 from Streptococcus agalactiae serotype III (strain NEM316).